The sequence spans 66 residues: Ranalexin (66 aa).

An N-terminal signal peptide occupies residues 1-20; the sequence is MFTLKKSLLLLFFLGTINLS. The propeptide at 21 to 44 is small acidic peptide; that stretch reads LCEEERNAEEERRDNPDERDVEVE. Residues Cys-60 and Cys-66 are joined by a disulfide bond.

It belongs to the frog skin active peptide (FSAP) family. Brevinin subfamily. As to expression, expressed by the skin dorsal glands.

The protein resides in the secreted. Functionally, potent microbicidal activity, active against S.aureus and E.coli. It also acts as a membrane-disruptive agent at higher concentrations. In Aquarana catesbeiana (American bullfrog), this protein is Ranalexin.